Reading from the N-terminus, the 70-residue chain is Peptide BmKn2 (70 aa).

Residues 1–23 form the signal peptide; the sequence is MKSQTFFLLFLVVLLLAISQSEA. Phe-36 is subject to Phenylalanine amide. The propeptide occupies 40–70; that stretch reads SMRDMDTMKYLYDPSLSAADLKTLQKLMENY.

It belongs to the non-disulfide-bridged peptide (NDBP) superfamily. Short antimicrobial peptide (group 4) family. In terms of tissue distribution, expressed by the venom gland.

The protein resides in the secreted. It is found in the target cell membrane. Antimicrobial peptide with potent activity against bacteria. Has strong antibacterial activity against Gram-positive bacteria S.aureus, M.luteus, B.subtilis, and Gram-negative bacteria E.coli, P.aeruginosa and N.gonorrhoeae. Also shows low activity against HIV-1 PV. In Olivierus martensii (Manchurian scorpion), this protein is Peptide BmKn2.